Here is a 260-residue protein sequence, read N- to C-terminus: Putative hydro-lyase Dshi_0610 (260 aa).

The protein belongs to the D-glutamate cyclase family.

The protein is Putative hydro-lyase Dshi_0610 of Dinoroseobacter shibae (strain DSM 16493 / NCIMB 14021 / DFL 12).